A 213-amino-acid polypeptide reads, in one-letter code: ATP phosphoribosyltransferase (213 aa).

It belongs to the ATP phosphoribosyltransferase family. Short subfamily. In terms of assembly, heteromultimer composed of HisG and HisZ subunits.

The protein localises to the cytoplasm. It carries out the reaction 1-(5-phospho-beta-D-ribosyl)-ATP + diphosphate = 5-phospho-alpha-D-ribose 1-diphosphate + ATP. Its pathway is amino-acid biosynthesis; L-histidine biosynthesis; L-histidine from 5-phospho-alpha-D-ribose 1-diphosphate: step 1/9. Functionally, catalyzes the condensation of ATP and 5-phosphoribose 1-diphosphate to form N'-(5'-phosphoribosyl)-ATP (PR-ATP). Has a crucial role in the pathway because the rate of histidine biosynthesis seems to be controlled primarily by regulation of HisG enzymatic activity. The sequence is that of ATP phosphoribosyltransferase from Nitrosococcus oceani (strain ATCC 19707 / BCRC 17464 / JCM 30415 / NCIMB 11848 / C-107).